Reading from the N-terminus, the 366-residue chain is tRNA/tmRNA (uracil-C(5))-methyltransferase (366 aa).

Positions 189, 217, 222, 238, and 298 each coordinate S-adenosyl-L-methionine. Cysteine 323 (nucleophile) is an active-site residue. Residue glutamate 357 is the Proton acceptor of the active site.

The protein belongs to the class I-like SAM-binding methyltransferase superfamily. RNA M5U methyltransferase family. TrmA subfamily.

The enzyme catalyses uridine(54) in tRNA + S-adenosyl-L-methionine = 5-methyluridine(54) in tRNA + S-adenosyl-L-homocysteine + H(+). It catalyses the reaction uridine(341) in tmRNA + S-adenosyl-L-methionine = 5-methyluridine(341) in tmRNA + S-adenosyl-L-homocysteine + H(+). Its function is as follows. Dual-specificity methyltransferase that catalyzes the formation of 5-methyluridine at position 54 (m5U54) in all tRNAs, and that of position 341 (m5U341) in tmRNA (transfer-mRNA). The protein is tRNA/tmRNA (uracil-C(5))-methyltransferase of Shewanella oneidensis (strain ATCC 700550 / JCM 31522 / CIP 106686 / LMG 19005 / NCIMB 14063 / MR-1).